The primary structure comprises 235 residues: tRNA pseudouridine synthase B (235 aa).

Residue aspartate 48 is the Nucleophile of the active site.

The protein belongs to the pseudouridine synthase TruB family. Type 1 subfamily.

It carries out the reaction uridine(55) in tRNA = pseudouridine(55) in tRNA. In terms of biological role, responsible for synthesis of pseudouridine from uracil-55 in the psi GC loop of transfer RNAs. The sequence is that of tRNA pseudouridine synthase B from Phocaeicola vulgatus (strain ATCC 8482 / DSM 1447 / JCM 5826 / CCUG 4940 / NBRC 14291 / NCTC 11154) (Bacteroides vulgatus).